Consider the following 137-residue polypeptide: Basic phospholipase A2 PeBP(R)-I/II (137 aa).

The signal sequence occupies residues 1 to 16; that stretch reads MRTLWIMAVLLLGVEG. Disulfide bonds link Cys42/Cys131, Cys44/Cys60, Cys59/Cys111, Cys65/Cys137, Cys66/Cys104, Cys73/Cys97, and Cys91/Cys102. His63 is an active-site residue. Residue Asp105 is part of the active site.

The protein belongs to the phospholipase A2 family. Group II subfamily. R49 sub-subfamily. In terms of tissue distribution, expressed by the venom gland.

It is found in the secreted. The enzyme catalyses a 1,2-diacyl-sn-glycero-3-phosphocholine + H2O = a 1-acyl-sn-glycero-3-phosphocholine + a fatty acid + H(+). Functionally, snake venom phospholipases A2 that have myotoxic, and edema-inducing activity, as well as extremely weak lipolytic activity. PLA2 catalyzes the calcium-dependent hydrolysis of the 2-acyl groups in 3-sn-phosphoglycerides. In Protobothrops elegans (Elegant pitviper), this protein is Basic phospholipase A2 PeBP(R)-I/II.